A 166-amino-acid chain; its full sequence is MSEAIIAKKAELVDVVAEKMKAAASIVVVDARGLTVEQDTVLRRELRGSEVEYKVIKNSILRRAAEKAGLEDLASVFVGPSAVAFSNEDVIAPAKILNNFSKNAEALEIKGGAIEGAVASKEEILALATLPNREGLLXMLLSVLQAPVRNVALAVKAVAESKEDAA.

The protein belongs to the universal ribosomal protein uL10 family. As to quaternary structure, part of the ribosomal stalk of the 50S ribosomal subunit. The N-terminus interacts with L11 and the large rRNA to form the base of the stalk. The C-terminus forms an elongated spine to which L12 dimers bind in a sequential fashion forming a multimeric L10(L12)X complex.

Forms part of the ribosomal stalk, playing a central role in the interaction of the ribosome with GTP-bound translation factors. This is Large ribosomal subunit protein uL10 from Streptococcus pneumoniae serotype 19F (strain G54).